A 200-amino-acid chain; its full sequence is Holliday junction branch migration complex subunit RuvA (200 aa).

The domain I stretch occupies residues 1–63; the sequence is MYAYVKGKLT…EDAQLLYGFS (63 aa). The interval 64–142 is domain II; sequence SEEEKDMFLS…ITEEDSDSLL (79 aa). Residues 143-149 are flexible linker; sequence QVDATST. Positions 150–200 are domain III; that stretch reads EQDQFVQEAMLALEALGYSKRELAKVEKTLNKNKYDSVDEAVKAGLQLVVS.

Belongs to the RuvA family. As to quaternary structure, homotetramer. Forms an RuvA(8)-RuvB(12)-Holliday junction (HJ) complex. HJ DNA is sandwiched between 2 RuvA tetramers; dsDNA enters through RuvA and exits via RuvB. An RuvB hexamer assembles on each DNA strand where it exits the tetramer. Each RuvB hexamer is contacted by two RuvA subunits (via domain III) on 2 adjacent RuvB subunits; this complex drives branch migration. In the full resolvosome a probable DNA-RuvA(4)-RuvB(12)-RuvC(2) complex forms which resolves the HJ.

The protein localises to the cytoplasm. The RuvA-RuvB-RuvC complex processes Holliday junction (HJ) DNA during genetic recombination and DNA repair, while the RuvA-RuvB complex plays an important role in the rescue of blocked DNA replication forks via replication fork reversal (RFR). RuvA specifically binds to HJ cruciform DNA, conferring on it an open structure. The RuvB hexamer acts as an ATP-dependent pump, pulling dsDNA into and through the RuvAB complex. HJ branch migration allows RuvC to scan DNA until it finds its consensus sequence, where it cleaves and resolves the cruciform DNA. In Staphylococcus aureus (strain MRSA252), this protein is Holliday junction branch migration complex subunit RuvA.